A 362-amino-acid chain; its full sequence is Endolytic peptidoglycan transglycosylase RlpA (362 aa).

The N-terminal stretch at 1–17 (MRKQWLGICIAAGMLAA) is a signal peptide. The N-palmitoyl cysteine moiety is linked to residue Cys-18. Cys-18 carries S-diacylglycerol cysteine lipidation. The disordered stretch occupies residues 198–276 (PDLSGGAGTS…PSTTPATSPA (79 aa)). Over residues 262–276 (PVVTAPSTTPATSPA) the composition is skewed to low complexity. In terms of domain architecture, SPOR spans 285-361 (QSASGNFMVQ…AQLQSFITTA (77 aa)).

Belongs to the RlpA family.

Its subcellular location is the cell membrane. Its function is as follows. Lytic transglycosylase with a strong preference for naked glycan strands that lack stem peptides. This chain is Endolytic peptidoglycan transglycosylase RlpA, found in Escherichia coli O157:H7.